A 211-amino-acid chain; its full sequence is Proteasome subunit beta 1 (211 aa).

Residues 1 to 17 constitute a propeptide, removed in mature form; by autocatalysis; sequence MVIMGNELQLENKILKG. Catalysis depends on Thr-18, which acts as the Nucleophile.

This sequence belongs to the peptidase T1B family. The 20S proteasome core is composed of 14 alpha and 14 beta subunits that assemble into four stacked heptameric rings, resulting in a barrel-shaped structure. The two inner rings, each composed of seven catalytic beta subunits, are sandwiched by two outer rings, each composed of seven alpha subunits. The catalytic chamber with the active sites is on the inside of the barrel. Has a gated structure, the ends of the cylinder being occluded by the N-termini of the alpha-subunits. Is capped at one or both ends by the proteasome regulatory ATPase, PAN.

The protein localises to the cytoplasm. It carries out the reaction Cleavage of peptide bonds with very broad specificity.. Its activity is regulated as follows. The formation of the proteasomal ATPase PAN-20S proteasome complex, via the docking of the C-termini of PAN into the intersubunit pockets in the alpha-rings, triggers opening of the gate for substrate entry. Interconversion between the open-gate and close-gate conformations leads to a dynamic regulation of the 20S proteasome proteolysis activity. Its function is as follows. Component of the proteasome core, a large protease complex with broad specificity involved in protein degradation. This is Proteasome subunit beta 1 from Saccharolobus islandicus (strain M.16.27) (Sulfolobus islandicus).